Reading from the N-terminus, the 159-residue chain is Flagellar assembly factor FliW (159 aa).

This sequence belongs to the FliW family. In terms of assembly, interacts with translational regulator CsrA and flagellin(s).

It localises to the cytoplasm. Acts as an anti-CsrA protein, binds CsrA and prevents it from repressing translation of its target genes, one of which is flagellin. Binds to flagellin and participates in the assembly of the flagellum. The polypeptide is Flagellar assembly factor FliW (Geobacter sulfurreducens (strain ATCC 51573 / DSM 12127 / PCA)).